We begin with the raw amino-acid sequence, 299 residues long: Bifunctional protein FolD (299 aa).

NADP(+) is bound by residues 166-168, S191, and I232; that span reads GRS.

The protein belongs to the tetrahydrofolate dehydrogenase/cyclohydrolase family. Homodimer.

It carries out the reaction (6R)-5,10-methylene-5,6,7,8-tetrahydrofolate + NADP(+) = (6R)-5,10-methenyltetrahydrofolate + NADPH. The catalysed reaction is (6R)-5,10-methenyltetrahydrofolate + H2O = (6R)-10-formyltetrahydrofolate + H(+). It functions in the pathway one-carbon metabolism; tetrahydrofolate interconversion. Functionally, catalyzes the oxidation of 5,10-methylenetetrahydrofolate to 5,10-methenyltetrahydrofolate and then the hydrolysis of 5,10-methenyltetrahydrofolate to 10-formyltetrahydrofolate. In Dinoroseobacter shibae (strain DSM 16493 / NCIMB 14021 / DFL 12), this protein is Bifunctional protein FolD.